The following is an 843-amino-acid chain: Protein P (843 aa).

The tract at residues 1–177 (MPLSYQHFRK…FCGSPYSWEQ (177 aa)) is terminal protein domain (TP). The spacer stretch occupies residues 178–346 (DLQHGRLVFQ…YCLCHIVNLI (169 aa)). The tract at residues 220–265 (QSRLGPQPAQGQLAGRQQGGSGSIRARVHPSPWGTVGVEPSGSGPT) is disordered. Residues 223–235 (LGPQPAQGQLAGR) are compositionally biased toward low complexity. The segment at 347 to 690 (EDWGPCTEHG…YLNLYPVARQ (344 aa)) is polymerase/reverse transcriptase domain (RT). In terms of domain architecture, Reverse transcriptase spans 357 to 600 (EHLIRTPRTP…YSLNFMGYVI (244 aa)). The Mg(2+) site is built by Asp-429, Asp-551, and Asp-552.

The protein belongs to the hepadnaviridae P protein family.

It carries out the reaction DNA(n) + a 2'-deoxyribonucleoside 5'-triphosphate = DNA(n+1) + diphosphate. It catalyses the reaction Endonucleolytic cleavage to 5'-phosphomonoester.. With respect to regulation, activated by host HSP70 and HSP40 in vitro to be able to bind the epsilon loop of the pgRNA. Because deletion of the RNase H region renders the protein partly chaperone-independent, the chaperones may be needed indirectly to relieve occlusion of the RNA-binding site by this domain. Inhibited by several reverse-transcriptase inhibitors: Lamivudine, Adefovir and Entecavir. Functionally, multifunctional enzyme that converts the viral RNA genome into dsDNA in viral cytoplasmic capsids. This enzyme displays a DNA polymerase activity that can copy either DNA or RNA templates, and a ribonuclease H (RNase H) activity that cleaves the RNA strand of RNA-DNA heteroduplexes in a partially processive 3'- to 5'-endonucleasic mode. Neo-synthesized pregenomic RNA (pgRNA) are encapsidated together with the P protein, and reverse-transcribed inside the nucleocapsid. Initiation of reverse-transcription occurs first by binding the epsilon loop on the pgRNA genome, and is initiated by protein priming, thereby the 5'-end of (-)DNA is covalently linked to P protein. Partial (+)DNA is synthesized from the (-)DNA template and generates the relaxed circular DNA (RC-DNA) genome. After budding and infection, the RC-DNA migrates in the nucleus, and is converted into a plasmid-like covalently closed circular DNA (cccDNA). The activity of P protein does not seem to be necessary for cccDNA generation, and is presumably released from (+)DNA by host nuclear DNA repair machinery. The polypeptide is Protein P (Hepatitis B virus genotype B2 (isolate Vietnam/9873/1997) (HBV-B)).